The sequence spans 568 residues: DNA mismatch repair protein MutL (568 aa).

The protein belongs to the DNA mismatch repair MutL/HexB family.

Functionally, this protein is involved in the repair of mismatches in DNA. It is required for dam-dependent methyl-directed DNA mismatch repair. May act as a 'molecular matchmaker', a protein that promotes the formation of a stable complex between two or more DNA-binding proteins in an ATP-dependent manner without itself being part of a final effector complex. The polypeptide is DNA mismatch repair protein MutL (Thermosipho africanus (strain TCF52B)).